The chain runs to 380 residues: ATP phosphoribosyltransferase regulatory subunit (380 aa).

The protein belongs to the class-II aminoacyl-tRNA synthetase family. HisZ subfamily. As to quaternary structure, heteromultimer composed of HisG and HisZ subunits.

It localises to the cytoplasm. It participates in amino-acid biosynthesis; L-histidine biosynthesis; L-histidine from 5-phospho-alpha-D-ribose 1-diphosphate: step 1/9. Its function is as follows. Required for the first step of histidine biosynthesis. May allow the feedback regulation of ATP phosphoribosyltransferase activity by histidine. This Thermoanaerobacter sp. (strain X514) protein is ATP phosphoribosyltransferase regulatory subunit.